A 308-amino-acid polypeptide reads, in one-letter code: Protease HtpX homolog (308 aa).

Transmembrane regions (helical) follow at residues 16–36 (LLSL…IYAV) and 39–59 (YLFG…VLMM). A Zn(2+)-binding site is contributed by histidine 149. The active site involves glutamate 150. Residue histidine 153 coordinates Zn(2+). A run of 2 helical transmembrane segments spans residues 161 to 181 (VIMA…TTLF) and 192 to 212 (IILA…VLSV). Glutamate 217 lines the Zn(2+) pocket.

Belongs to the peptidase M48B family. The cofactor is Zn(2+).

Its subcellular location is the cell membrane. The polypeptide is Protease HtpX homolog (Thermoplasma volcanium (strain ATCC 51530 / DSM 4299 / JCM 9571 / NBRC 15438 / GSS1)).